Consider the following 270-residue polypeptide: tRNA pseudouridine synthase A (270 aa).

Catalysis depends on Asp60, which acts as the Nucleophile. The RNA binding stretch occupies residues 107–111; the sequence is FHARF. Tyr118 contributes to the substrate binding site. Residues 168-172 form an interaction with tRNA region; it reads QCQSR.

The protein belongs to the tRNA pseudouridine synthase TruA family. As to quaternary structure, homodimer.

It carries out the reaction uridine(38/39/40) in tRNA = pseudouridine(38/39/40) in tRNA. Formation of pseudouridine at positions 38, 39 and 40 in the anticodon stem and loop of transfer RNAs. The chain is tRNA pseudouridine synthase A from Escherichia coli (strain K12 / DH10B).